A 433-amino-acid polypeptide reads, in one-letter code: F-box only protein 15 (433 aa).

One can recognise an F-box domain in the interval 1-41 (MPSEILVKILSYLDAVTLVCIGCVSRRFYHLADDNLIWVRK).

In terms of assembly, directly interacts with SKP1 and CUL1. As to expression, expressed in testis.

In terms of biological role, substrate-recognition component of the SCF (SKP1-CUL1-F-box protein)-type E3 ubiquitin ligase complex. The protein is F-box only protein 15 (Fbxo15) of Mus musculus (Mouse).